The sequence spans 239 residues: Putative CRISPR-associated endoribonuclease-like protein Cas6nc (239 aa).

The protein belongs to the CRISPR-associated protein Cas6/Cse3/CasE family. Monomer; homodimer when crystallized in the presence of crRNA. Varying the crRNA sequence varies degree of oligomerization and structure.

In terms of biological role, CRISPR (clustered regularly interspaced short palindromic repeat), is an adaptive immune system that provides protection against mobile genetic elements (viruses, transposable elements and conjugative plasmids). CRISPR clusters contain sequences complementary to antecedent mobile elements and target invading nucleic acids. CRISPR clusters are transcribed and processed into CRISPR RNA (crRNA), also called psiRNA (prokaryotic silencing) in this organism (Potential). This Pyrococcus horikoshii (strain ATCC 700860 / DSM 12428 / JCM 9974 / NBRC 100139 / OT-3) protein is Putative CRISPR-associated endoribonuclease-like protein Cas6nc (cas6nc).